A 736-amino-acid chain; its full sequence is Protein kinase C epsilon type (736 aa).

A C2 domain is found at M1–I117. Phosphoserine is present on S62. A Phorbol-ester/DAG-type 1 zinc finger spans residues G169–V220. Phosphothreonine is present on T228. S234 carries the post-translational modification Phosphoserine. The Phorbol-ester/DAG-type 2 zinc-finger motif lies at P242–C292. The residue at position 309 (T309) is a Phosphothreonine. The interval P310–L356 is disordered. Phosphoserine is present on residues S316, S329, and S337. The residue at position 346 (S346) is a Phosphoserine; by GSK3-beta. T349 is subject to Phosphothreonine. Phosphoserine; by MAPK11 and MAPK14 is present on S350. S368 bears the Phosphoserine; by autocatalysis mark. Residues F369–G397 form a disordered region. S388 carries the post-translational modification Phosphoserine. Positions F407–F667 constitute a Protein kinase domain. ATP-binding positions include L413 to V421 and K436. The Proton acceptor role is filled by D531. T565 carries the phosphothreonine; by PDPK1 modification. The AGC-kinase C-terminal domain maps to K668–P736. Phosphothreonine is present on T702. At T709 the chain carries Phosphothreonine; by autocatalysis. Residue S728 is modified to Phosphoserine; by autocatalysis.

It belongs to the protein kinase superfamily. AGC Ser/Thr protein kinase family. PKC subfamily. As to quaternary structure, forms a ternary complex with TRIM63 and RACK1/GN2BL1. Can form a complex with PDLIM5 and N-type calcium channel. Interacts with COPB1. Interacts with DGKQ. Interacts with STAT3. Interacts with YWHAB. Interacts with HSP90AB1; promotes functional activation in a heat shock-dependent manner. Interacts (via phorbol-ester/DAG-type 2 domain) with PRPH and VIM. Interacts with NLRP5/MATER. In terms of processing, phosphorylation on Thr-565 by PDPK1 triggers autophosphorylation on Ser-728. Phosphorylation in the hinge domain at Ser-350 by MAPK11 or MAPK14, Ser-346 by GSK3B and Ser-368 by autophosphorylation is required for interaction with YWHAB. In response to growth factors, phosphorylated at Thr-702 and Ser-728 by the mTORC2 complex, promoting autophosphorylation and activation of PRKCE.

It localises to the cytoplasm. Its subcellular location is the cytoskeleton. The protein resides in the cell membrane. The protein localises to the perinuclear region. It is found in the nucleus. It carries out the reaction L-seryl-[protein] + ATP = O-phospho-L-seryl-[protein] + ADP + H(+). It catalyses the reaction L-threonyl-[protein] + ATP = O-phospho-L-threonyl-[protein] + ADP + H(+). With respect to regulation, novel PKCs (PRKCD, PRKCE, PRKCH and PRKCQ) are calcium-insensitive, but activated by diacylglycerol (DAG) and phosphatidylserine. Three specific sites; Thr-565 (activation loop of the kinase domain), Thr-709 (turn motif) and Ser-728 (hydrophobic region), need to be phosphorylated for its full activation. Its function is as follows. Calcium-independent, phospholipid- and diacylglycerol (DAG)-dependent serine/threonine-protein kinase that plays essential roles in the regulation of multiple cellular processes linked to cytoskeletal proteins, such as cell adhesion, motility, migration and cell cycle, functions in neuron growth and ion channel regulation, and is involved in immune response, cancer cell invasion and regulation of apoptosis. Mediates cell adhesion to the extracellular matrix via integrin-dependent signaling, by mediating angiotensin-2-induced activation of integrin beta-1 (ITGB1) in cardiac fibroblasts. Phosphorylates MARCKS, which phosphorylates and activates PTK2/FAK, leading to the spread of cardiomyocytes. Involved in the control of the directional transport of ITGB1 in mesenchymal cells by phosphorylating vimentin (VIM), an intermediate filament (IF) protein. In epithelial cells, associates with and phosphorylates keratin-8 (KRT8), which induces targeting of desmoplakin at desmosomes and regulates cell-cell contact. Phosphorylates IQGAP1, which binds to CDC42, mediating epithelial cell-cell detachment prior to migration. During cytokinesis, forms a complex with YWHAB, which is crucial for daughter cell separation, and facilitates abscission by a mechanism which may implicate the regulation of RHOA. In cardiac myocytes, regulates myofilament function and excitation coupling at the Z-lines, where it is indirectly associated with F-actin via interaction with COPB1. During endothelin-induced cardiomyocyte hypertrophy, mediates activation of PTK2/FAK, which is critical for cardiomyocyte survival and regulation of sarcomere length. Plays a role in the pathogenesis of dilated cardiomyopathy via persistent phosphorylation of troponin I (TNNI3). Involved in nerve growth factor (NFG)-induced neurite outgrowth and neuron morphological change independently of its kinase activity, by inhibition of RHOA pathway, activation of CDC42 and cytoskeletal rearrangement. May be involved in presynaptic facilitation by mediating phorbol ester-induced synaptic potentiation. Phosphorylates gamma-aminobutyric acid receptor subunit gamma-2 (GABRG2), which reduces the response of GABA receptors to ethanol and benzodiazepines and may mediate acute tolerance to the intoxicating effects of ethanol. Upon PMA treatment, phosphorylates the capsaicin- and heat-activated cation channel TRPV1, which is required for bradykinin-induced sensitization of the heat response in nociceptive neurons. Is able to form a complex with PDLIM5 and N-type calcium channel, and may enhance channel activities and potentiates fast synaptic transmission by phosphorylating the pore-forming alpha subunit CACNA1B (CaV2.2). Downstream of TLR4, plays an important role in the lipopolysaccharide (LPS)-induced immune response by phosphorylating and activating TICAM2/TRAM, which in turn activates the transcription factor IRF3 and subsequent cytokines production. In differentiating erythroid progenitors, is regulated by EPO and controls the protection against the TNFSF10/TRAIL-mediated apoptosis, via BCL2. May be involved in the regulation of the insulin-induced phosphorylation and activation of AKT1. Phosphorylates NLRP5/MATER and may thereby modulate AKT pathway activation in cumulus cells. Phosphorylates and activates LRRK1, which phosphorylates RAB proteins involved in intracellular trafficking. The chain is Protein kinase C epsilon type (PRKCE) from Oryctolagus cuniculus (Rabbit).